The following is a 186-amino-acid chain: Ribosome-recycling factor (186 aa).

Belongs to the RRF family.

Its subcellular location is the cytoplasm. Responsible for the release of ribosomes from messenger RNA at the termination of protein biosynthesis. May increase the efficiency of translation by recycling ribosomes from one round of translation to another. The polypeptide is Ribosome-recycling factor (Rickettsia prowazekii (strain Madrid E)).